Reading from the N-terminus, the 212-residue chain is Octanoyltransferase (212 aa).

The region spanning 31–209 (AETQDEIWLV…HFADLLGYNI (179 aa)) is the BPL/LPL catalytic domain. Residues 70–77 (RGGQITYH), 138–140 (SLG), and 151–153 (GLA) contribute to the substrate site. Catalysis depends on C169, which acts as the Acyl-thioester intermediate.

Belongs to the LipB family.

The protein localises to the cytoplasm. The catalysed reaction is octanoyl-[ACP] + L-lysyl-[protein] = N(6)-octanoyl-L-lysyl-[protein] + holo-[ACP] + H(+). It participates in protein modification; protein lipoylation via endogenous pathway; protein N(6)-(lipoyl)lysine from octanoyl-[acyl-carrier-protein]: step 1/2. Functionally, catalyzes the transfer of endogenously produced octanoic acid from octanoyl-acyl-carrier-protein onto the lipoyl domains of lipoate-dependent enzymes. Lipoyl-ACP can also act as a substrate although octanoyl-ACP is likely to be the physiological substrate. The chain is Octanoyltransferase from Haemophilus influenzae (strain PittGG).